Consider the following 285-residue polypeptide: MARCO-like protein (285 aa).

The signal sequence occupies residues 1–20 (MRAFIFFLFMLLAMFSASST). Residue Asn24 is glycosylated (N-linked (GlcNAc...) asparagine). Disordered stretches follow at residues 47–77 (NHLG…GQPG) and 91–285 (GRAG…QGNL). Composition is skewed to polar residues over residues 57-67 (KQGGSYTQGNP) and 105-114 (SGKSNQKGNP). The segment covering 115 to 128 (ESSNKQENSGSSSQ) has biased composition (low complexity). Positions 134 to 145 (ISTQQGNPGSSD) are enriched in polar residues. Residues 160-173 (GSSSQQGKPGSSSQ) are compositionally biased toward low complexity. Residues 174–185 (HGNLGSSTQKGN) are compositionally biased toward polar residues. The segment covering 186–220 (LGSSSLQGHLGLSSHQGKPESSGQQGKPGSSSQQG) has biased composition (low complexity). Over residues 221 to 285 (NLGTSGQQEK…PGSSSRQGNL (65 aa)) the composition is skewed to polar residues.

In Homo sapiens (Human), this protein is MARCO-like protein.